A 419-amino-acid polypeptide reads, in one-letter code: Histidine--tRNA ligase (419 aa).

It belongs to the class-II aminoacyl-tRNA synthetase family. In terms of assembly, homodimer.

It is found in the cytoplasm. The enzyme catalyses tRNA(His) + L-histidine + ATP = L-histidyl-tRNA(His) + AMP + diphosphate + H(+). The sequence is that of Histidine--tRNA ligase from Thermosipho melanesiensis (strain DSM 12029 / CIP 104789 / BI429).